We begin with the raw amino-acid sequence, 63 residues long: Protein DsrB (63 aa).

This sequence belongs to the DsrB family.

The sequence is that of Protein DsrB from Yersinia enterocolitica serotype O:8 / biotype 1B (strain NCTC 13174 / 8081).